The primary structure comprises 273 residues: Ribonuclease PH (273 aa).

Phosphate contacts are provided by residues Arg86 and 124 to 126; that span reads GTR. Residues 254 to 273 form a disordered region; sequence GHQEPGEGAGVSLAPGGGGL.

This sequence belongs to the RNase PH family. Homohexameric ring arranged as a trimer of dimers.

The enzyme catalyses tRNA(n+1) + phosphate = tRNA(n) + a ribonucleoside 5'-diphosphate. Functionally, phosphorolytic 3'-5' exoribonuclease that plays an important role in tRNA 3'-end maturation. Removes nucleotide residues following the 3'-CCA terminus of tRNAs; can also add nucleotides to the ends of RNA molecules by using nucleoside diphosphates as substrates, but this may not be physiologically important. Probably plays a role in initiation of 16S rRNA degradation (leading to ribosome degradation) during starvation. This is Ribonuclease PH from Symbiobacterium thermophilum (strain DSM 24528 / JCM 14929 / IAM 14863 / T).